A 126-amino-acid chain; its full sequence is Large ribosomal subunit protein bL19 (126 aa).

It belongs to the bacterial ribosomal protein bL19 family.

This protein is located at the 30S-50S ribosomal subunit interface and may play a role in the structure and function of the aminoacyl-tRNA binding site. The sequence is that of Large ribosomal subunit protein bL19 from Paracoccus denitrificans (strain Pd 1222).